We begin with the raw amino-acid sequence, 330 residues long: Endochitinase Ziz m 1.0101 (330 aa).

Positions 1 to 24 (MVPQAKLVVASLILTSALIQTSEA) are cleaved as a signal peptide. The 305-residue stretch at 26 to 330 (GGIATYWGQY…LRTKFMYQNA (305 aa)) folds into the GH18 domain. 3 disulfide bridges follow: Cys47–Cys90, Cys77–Cys80, and Cys187–Cys219. The tract at residues 72–86 (NISGHCSDCTFLGEE) is binds to IgE in 70% of the 10 patients tested allergic to Indian jujube and latex. Residues 292–301 (VWNRYYDLKT) are binds to IgE in 100% of the 10 patients tested allergic to Indian jujube and latex; sufficient for prediction of the presence of allergic reactions in these patients. 2 binds to IgE in 70% of the 10 patients tested allergic to Indian jujube and latex regions span residues 300 to 311 (KTNYSSSIILEY) and 309 to 320 (LEYVNSGTKYLP).

The protein belongs to the glycosyl hydrolase 18 family. Chitinase class II subfamily.

Its subcellular location is the secreted. The enzyme catalyses Random endo-hydrolysis of N-acetyl-beta-D-glucosaminide (1-&gt;4)-beta-linkages in chitin and chitodextrins.. Defense against chitin containing fungal pathogens. The chain is Endochitinase Ziz m 1.0101 from Ziziphus mauritiana (Indian jujube).